A 425-amino-acid polypeptide reads, in one-letter code: Decarboxylase flvG (425 aa).

Position 82 is an N6-(pyridoxal phosphate)lysine (lysine 82). Pyridoxal 5'-phosphate contacts are provided by residues serine 213, glycine 250, and 281–284 (EPGR). Residue 331 to 332 (FE) participates in substrate binding. Cysteine 365 functions as the Proton donor; shared with dimeric partner in the catalytic mechanism. Residue aspartate 366 participates in substrate binding. Residue tyrosine 395 coordinates pyridoxal 5'-phosphate.

This sequence belongs to the Orn/Lys/Arg decarboxylase class-II family. In terms of assembly, homodimer. Only the dimer is catalytically active, as the active sites are constructed of residues from both monomers. Pyridoxal 5'-phosphate is required as a cofactor.

It localises to the cytoplasm. The enzyme catalyses N(6),N(6)-dimethyl-L-lysine + H(+) = N,N-dimethyl-cadaverine + CO2. Its pathway is secondary metabolite biosynthesis; terpenoid biosynthesis. Its function is as follows. Decarboxylase; part of the gene cluster that mediates the biosynthesis of flavunoidine, an alkaloidal terpenoid with a tetracyclic cage-like core connected to dimethylcadaverine via a C-N bond and acylated with 5,5-dimethyl-L-pipecolate. The tetracyclic core is synthesized by the terpene cyclase flvE and the cytochrome P450 monooxygenase flvD. The terpene cyclase flvE catalyzes the cyclization of farnesyl pyrophosphate (FPP) to form (1R,4R,5S)-(+)-acoradiene and the cytochrome P450 monooxygenase flvD is then responsible for oxidative conversion of (1R,4R,5S)-(+)-acoradiene into the tetracyclic cage present in the final product flavunoidine. In parallel, the N-methyltransferase flvH dimethylates L-lysine to give N,N-dimethyl-L-Lysin which is decarboxylated by flvG to afford dimethylcadaverine. The terpene cyclase-like protein flvF is the enzyme that attaches the dimethylcadaverine precusor at the C-7 of the tetracyclic cage to yield pre-flavunoidine. The cytochrome monooxygenase flvC hydroxylates the C-10 position of pre-flavunoidine whereas the NRPS flvI acylates the terpenoid core at the hydroxylated C-10 with dimethylpipecolate to yield final flavunoidine. The bifunctional enzyme flvA and the dehydrogenase flvB are responsible for the synthesis of the dimethylpipecolate precursor. The PLP-dependent lyase domain of flvA might use L-O-acetyl-homoserine and alpha-keto-isovalerate to form an intermediary ketone that can cyclize intramolecularly to yield an imine. The imine can be reduced by flvB to yield the 6-carboxylated pipecolate. The C-terminal alpha-KG-dependent oxygenase domain of flvA is then proposed to catalyze the decarboxylation to yield dimethylpipecolate. This chain is Decarboxylase flvG, found in Aspergillus flavus (strain ATCC 200026 / FGSC A1120 / IAM 13836 / NRRL 3357 / JCM 12722 / SRRC 167).